The sequence spans 509 residues: Group 3 secretory phospholipase A2 (509 aa).

The N-terminal stretch at 1-19 (MGVQAGLFGMLGFLGVALG) is a signal peptide. The tract at residues 123-149 (ESPAGARKKRAAGQSGVPGGGHQREKR) is disordered. The segment at 150–291 (GWTMPGTLWC…SWSSRATSPT (142 aa)) is phospholipase A2-like. Ca(2+) contacts are provided by Trp-158, Gly-160, and Gly-162. 4 disulfides stabilise this stretch: Cys-159–Cys-181, Cys-180–Cys-220, Cys-187–Cys-213, and Cys-211–Cys-244. Asn-167 carries an N-linked (GlcNAc...) asparagine glycan. His-184 is a catalytic residue. Asp-185 is a binding site for Ca(2+). Residue Asp-214 is part of the active site. Asn-280 is a glycosylation site (N-linked (GlcNAc...) asparagine). The interval 283-354 (WSSRATSPTP…LQGPQGGLKP (72 aa)) is disordered. Residues 284-296 (SSRATSPTPSSRS) show a composition bias toward low complexity. The span at 302–322 (PRQKQHLRKGPPHQKGSKRPS) shows a compositional bias: basic residues. 3 N-linked (GlcNAc...) asparagine glycosylation sites follow: Asn-325, Asn-396, and Asn-439. The disordered stretch occupies residues 458-482 (QQRRHQLQDKGTDERQPWPSEPLRG). A compositionally biased stretch (basic and acidic residues) spans 463–473 (QLQDKGTDERQ).

This sequence belongs to the phospholipase A2 family. Ca(2+) serves as cofactor. Post-translationally, N-glycosylation does not affect the catalytic activity, but is required for proper secretion. A nonglycosylated form is observed in several cell types. In several cell types, the N- and C-termini are cleaved off. As to expression, expressed in kidney, heart, liver, and skeletal muscle. Also present in placenta and peripheral blood leukocytes. Not detected in colon, thymus, spleen and small intestine. In lung, expressed in bronchial epithelial cells and alveolar macrophages, but scarcely detected in alveolar epithelium, arterial walls and interstitial fibroblasts (at protein level). In joints of osteoarthritis and rheumatoid arthritis, expressed in endothelial cells (at protein level). In normal heart, detected in some vessels. In myocardial tissues with acute infarction, expressed in vascular endothelial cells adjacent to cardiomyocytes and those in lesions with granulation. Expression in cardiomyocytes is scarce (at protein level). In uterus, breast and colon cancers, detected in tumor cells and neighboring microvascular endothelium, but not in normal glandular tissues (at protein level). Expressed in dermal resting mast cells (at protein level) and pulmonary mast cells. Expressed in neuronal fibers (at protein level). Highly expressed in dorsal root ganglia neurons (at protein level). Expressed in Purkinje cells in cerebellum (at protein level). In stomach is preferentially expressed in neuronal fibers and in microvascular endothelium. Sparsely expressed in normal aorta (at protein level). Highly expressed in macrophages and smooth muscle cells in aorta with atheroma.

The protein localises to the secreted. It is found in the cell membrane. The protein resides in the cytoplasm. Its subcellular location is the cytoskeleton. It localises to the microtubule organizing center. The protein localises to the centrosome. It is found in the centriole. The protein resides in the recycling endosome. It catalyses the reaction a 1,2-diacyl-sn-glycero-3-phosphocholine + H2O = a 1-acyl-sn-glycero-3-phosphocholine + a fatty acid + H(+). The enzyme catalyses 1-hexadecanoyl-2-(9Z,12Z-octadecadienoyl)-sn-glycero-3-phosphocholine + H2O = (9Z,12Z)-octadecadienoate + 1-hexadecanoyl-sn-glycero-3-phosphocholine + H(+). It carries out the reaction 1-hexadecanoyl-2-(5Z,8Z,11Z,14Z-eicosatetraenoyl)-sn-glycero-3-phosphocholine + H2O = 1-hexadecanoyl-sn-glycero-3-phosphocholine + (5Z,8Z,11Z,14Z)-eicosatetraenoate + H(+). The catalysed reaction is 1-hexadecanoyl-2-(9Z,12Z-octadecadienoyl)-sn-glycero-3-phosphoethanolamine + H2O = 1-hexadecanoyl-sn-glycero-3-phosphoethanolamine + (9Z,12Z)-octadecadienoate + H(+). It catalyses the reaction 1-hexadecanoyl-2-(5Z,8Z,11Z,14Z-eicosatetraenoyl)-sn-glycero-3-phosphoethanolamine + H2O = 1-hexadecanoyl-sn-glycero-3-phosphoethanolamine + (5Z,8Z,11Z,14Z)-eicosatetraenoate + H(+). Its activity is regulated as follows. Arachidonic acid release is markedly increased by glypican, a glycosylphosphatidylinositol-anchored heparan sulfate proteoglycan. Secretory calcium-dependent phospholipase A2 that primarily targets extracellular phospholipids. Hydrolyzes the ester bond of the fatty acyl group attached at sn-2 position of phospholipids without apparent head group selectivity. Contributes to phospholipid remodeling of low-density lipoprotein (LDL) and high-density lipoprotein (HDL) particles. Hydrolyzes LDL phospholipids releasing unsaturated fatty acids that regulate macrophage differentiation toward foam cells. May act in an autocrine and paracrine manner. Secreted by immature mast cells, acts on nearby fibroblasts upstream to PTDGS to synthesize prostaglandin D2 (PGD2), which in turn promotes mast cell maturation and degranulation via PTGDR. Secreted by epididymal epithelium, acts on immature sperm cells within the duct, modulating the degree of unsaturation of the fatty acyl components of phosphatidylcholines required for acrosome assembly and sperm cell motility. Facilitates the replacement of fatty acyl chains in phosphatidylcholines in sperm membranes from omega-6 and omega-9 to omega-3 polyunsaturated fatty acids (PUFAs). Coupled to lipoxygenase pathway, may process omega-6 PUFAs to generate oxygenated lipid mediators in the male reproductive tract. At pericentrosomal preciliary compartment, negatively regulates ciliogenesis likely by regulating endocytotic recycling of ciliary membrane protein. Coupled to cyclooxygenase pathway provides arachidonate to generate prostaglandin E2 (PGE2), a potent immunomodulatory lipid in inflammation and tumorigenesis. At colonic epithelial barrier, preferentially hydrolyzes phospholipids having arachidonate and docosahexaenoate at sn-2 position, contributing to the generation of oxygenated metabolites involved in colonic stem cell homeostasis. Releases C16:0 and C18:0 lysophosphatidylcholine subclasses from neuron plasma membranes and promotes neurite outgrowth and neuron survival. The protein is Group 3 secretory phospholipase A2 of Homo sapiens (Human).